The following is a 202-amino-acid chain: MGFWGTYLLFCLFSFLSQLTAESPTPKAKKAANAKKDLVSSKMFEELKNRMDVLAQEVALLKEKQALQTVCLKGTKVNLKCLLAFTQPKTFHEASEDCISQGGTLGTPQSELENEALFEYARHSVGNDANIWLGLNDMAAEGAWVDMTGGLLAYKNWETEITTQPDGGKAENCAALSGAANGKWFDKRCRDQLPYICQFAIV.

Positions 1-21 (MGFWGTYLLFCLFSFLSQLTA) are cleaved as a signal peptide. Intrachain disulfides connect Cys-71-Cys-81, Cys-98-Cys-197, and Cys-173-Cys-189. The 122-residue stretch at 77-198 (VNLKCLLAFT…CRDQLPYICQ (122 aa)) folds into the C-type lectin domain.

As to quaternary structure, homotrimer. Highest expression in lung, skeletal muscle and heart. Expressed in retina.

The protein localises to the secreted. Its function is as follows. Tetranectin binds to plasminogen and to isolated kringle 4. May be involved in the packaging of molecules destined for exocytosis. Plays a role in retinal function. The sequence is that of Tetranectin (Clec3b) from Mus musculus (Mouse).